The primary structure comprises 635 residues: MNSAVIELFRHHVNNIPNILPHQLATLDYLVRSIIDENKSVLLFHIMGSGKTIIALLFALVASRFKKVYILVPNINILKIFNYSMDVVINLFNADYILENIFIYSTTSFYSINYNDNVINYNGLSRYNNAIFIIDEAHNIFGNNTGELMTVIKNKNKIPFLLLSGSPITNTPITLSNIISLMSDEEINFGDIIIQGKKVFQILLNEHGVNVLKNILKGRISYYKMPDTDLPGIQYHGKSFLDTRVVYCNMSKLQEKDYINVRKMCNNEMFEKNMNNVSLAVLGQLNLINNLDILFQEQDKELYPNLKINNGVLYGEELVTLNISSKFKYFITKIESLKGKHFIYFSNSTYGGLIIKYIMLSNGYSEYNGSQGTHPKLIHGRPKTFAIVTSKMKASLEDLLVTYNSLANDDGSQIMFLFSSNIMSESYTLKEVRNIWFMTIPDTFSQYNQILGRSIRKFSYKDITQPVNVYLLAAVYSDFNDTIESLDDYSLEEINTLPFDIKKLLYLKFKTKETNRIYSILENISDSYTQPPHPHIVEIVLGEIVRQFFYHHSRIKHNDERLLAAVKSVLTNTEAAKKYIKEIVDGHFFVSNKVFDKSLLYMYNDEIITVPFKLSHEPFVWGVNFRKEYNVVSSP.

The Helicase ATP-binding domain maps to 32–185 (RSIIDENKSV…SNIISLMSDE (154 aa)). 45 to 52 (HIMGSGKT) contacts ATP. A DEXH box motif is present at residues 135–138 (DEAH). In terms of domain architecture, Helicase C-terminal spans 326-505 (KFKYFITKIE…TLPFDIKKLL (180 aa)).

The protein belongs to the helicase family. VETF subfamily. In terms of assembly, heterodimer of a 70 kDa and a 82 kDa subunit. Part of the early transcription complex composed of ETF, RAP94, and the DNA-directed RNA polymerase.

Its subcellular location is the virion. Acts with RNA polymerase to initiate transcription from early gene promoters. Is recruited by the RPO-associated protein of 94 kDa (RAP94) to form the early transcription complex, which also contains the core RNA polymerase. ETF heterodimer binds to early gene promoters. This Oryctolagus cuniculus (Rabbit) protein is Early transcription factor 70 kDa subunit (VETFS).